Reading from the N-terminus, the 881-residue chain is Interference hedgehog (881 aa).

An N-terminal signal peptide occupies residues 1-26 (MSSSSSSLLLMMLLLLLLLLTSKLEA). Residues 27 to 693 (IPVLSSTSPS…NHNETYSLNP (667 aa)) are Extracellular-facing. Ig-like C2-type domains lie at 37–138 (PGVR…IARL), 128–228 (PLVV…IPSS), 242–330 (PYLL…YINV), and 336–425 (PVIV…LQVN). Intrachain disulfides connect Cys-60-Cys-122, Cys-167-Cys-212, and Cys-266-Cys-314. N-linked (GlcNAc...) asparagine glycans are attached at residues Asn-75, Asn-98, Asn-194, Asn-201, Asn-282, Asn-349, Asn-381, Asn-430, and Asn-455. Residues Cys-358 and Cys-407 are joined by a disulfide bond. Fibronectin type-III domains lie at 450 to 558 (PPSA…LQRG) and 566 to 661 (VPEL…TQRS). Positions 486, 492, and 494 each coordinate heparin. The N-linked (GlcNAc...) asparagine glycan is linked to Asn-517. Arg-532 contributes to the heparin binding site. N-linked (GlcNAc...) asparagine glycosylation occurs at Asn-548. Residues 655–685 (QGRTQRSKLTTTEQPIQQKGGDRNVNTTPNH) form a disordered region. Residues 656-671 (GRTQRSKLTTTEQPIQ) are compositionally biased toward polar residues. Asn-686 carries an N-linked (GlcNAc...) asparagine glycan. Residues 694-714 (LLTGTIGGGALLLLLLIAFSF) traverse the membrane as a helical segment. Over 715–881 (CLCRRKNRNG…SSGSLNSVGV (167 aa)) the chain is Cytoplasmic. Disordered stretches follow at residues 768 to 791 (NPLD…NSPH) and 809 to 881 (PTTY…SVGV). Positions 837–855 (PGSNNNLQQIGSETTTTGQ) are enriched in polar residues. A compositionally biased stretch (low complexity) spans 865-881 (SSRSENLSSGSLNSVGV).

The protein belongs to the immunoglobulin superfamily. IHOG family. Homodimer. Heterotetramer; 2 iHog chains bind 2 hh chains when facilitated by heparin, heparin is required to promote high-affinity interactions between hh and iHog.

Its subcellular location is the membrane. Mediates response to the active Hedgehog (Hh) protein signal in embryos, functioning upstream or at the level of patched (ptc). The protein is Interference hedgehog of Drosophila willistoni (Fruit fly).